Reading from the N-terminus, the 158-residue chain is Copper transporter 2 (158 aa).

Residues 1-20 are disordered; the sequence is MDHDHMHDMPPPSPSSSSMS. 2 consecutive transmembrane segments (helical) span residues 53 to 73 and 104 to 124; these read GMYA…EWLA and YLVM…AIAG.

This sequence belongs to the copper transporter (Ctr) (TC 1.A.56) family. SLC31A subfamily. As to expression, highly expressed in leaves and at lower levels in roots, stems and flowers.

The protein localises to the membrane. Its function is as follows. Involved in the transport of copper. The protein is Copper transporter 2 (COPT2) of Arabidopsis thaliana (Mouse-ear cress).